Here is a 358-residue protein sequence, read N- to C-terminus: Arginase (358 aa).

Mn(2+) is bound by residues His146, Asp174, His176, and Asp178. Substrate is bound by residues 176–180 (HADIN), 187–189 (SGN), and Asp233. Asp280 and Asp282 together coordinate Mn(2+). Thr294 and Glu325 together coordinate substrate.

Belongs to the arginase family. In terms of assembly, homohexamer. Mn(2+) serves as cofactor.

Its subcellular location is the cytoplasm. The enzyme catalyses L-arginine + H2O = urea + L-ornithine. Its pathway is nitrogen metabolism; urea cycle; L-ornithine and urea from L-arginine: step 1/1. In Neurospora crassa (strain ATCC 24698 / 74-OR23-1A / CBS 708.71 / DSM 1257 / FGSC 987), this protein is Arginase (aga-1).